The chain runs to 210 residues: Histidine biosynthesis bifunctional protein HisIE (210 aa).

A phosphoribosyl-AMP cyclohydrolase region spans residues 1-121; the sequence is MNPASPFATL…DAQEESQMVW (121 aa). The segment at 122-210 is phosphoribosyl-ATP pyrophosphohydrolase; that stretch reads LHQLEQLLAE…VINKLKERHK (89 aa).

It in the N-terminal section; belongs to the PRA-CH family. In the C-terminal section; belongs to the PRA-PH family.

The protein localises to the cytoplasm. It carries out the reaction 1-(5-phospho-beta-D-ribosyl)-ATP + H2O = 1-(5-phospho-beta-D-ribosyl)-5'-AMP + diphosphate + H(+). The enzyme catalyses 1-(5-phospho-beta-D-ribosyl)-5'-AMP + H2O = 1-(5-phospho-beta-D-ribosyl)-5-[(5-phospho-beta-D-ribosylamino)methylideneamino]imidazole-4-carboxamide. It functions in the pathway amino-acid biosynthesis; L-histidine biosynthesis; L-histidine from 5-phospho-alpha-D-ribose 1-diphosphate: step 2/9. Its pathway is amino-acid biosynthesis; L-histidine biosynthesis; L-histidine from 5-phospho-alpha-D-ribose 1-diphosphate: step 3/9. This chain is Histidine biosynthesis bifunctional protein HisIE (hisI), found in Vibrio cholerae serotype O1 (strain ATCC 39315 / El Tor Inaba N16961).